The following is a 126-amino-acid chain: MLKNTLDMTEYLSFLYFIFFSLFFCCFMLFTSWFLGGRSLSRYKNTPFESGVVSVGNTHLHFSVKFYLIAIFFVIFDVEALYLYAWSVSIVESGWIGFVEATIFILFLLLSLFYLVRIKALNWVTS.

A run of 3 helical transmembrane segments spans residues 14–34 (FLYF…TSWF), 66–86 (FYLI…LYAW), and 96–116 (IGFV…FYLV).

Belongs to the complex I subunit 3 family. As to quaternary structure, NDH-1 is composed of 13 different subunits. Subunits NuoA, H, J, K, L, M, N constitute the membrane sector of the complex.

The protein resides in the cell membrane. The catalysed reaction is a quinone + NADH + 5 H(+)(in) = a quinol + NAD(+) + 4 H(+)(out). NDH-1 shuttles electrons from NADH, via FMN and iron-sulfur (Fe-S) centers, to quinones in the respiratory chain. The immediate electron acceptor for the enzyme in this species is believed to be ubiquinone. Couples the redox reaction to proton translocation (for every two electrons transferred, four hydrogen ions are translocated across the cytoplasmic membrane), and thus conserves the redox energy in a proton gradient. The polypeptide is NADH-quinone oxidoreductase subunit A (Buchnera aphidicola subsp. Schizaphis graminum (strain Sg)).